The chain runs to 203 residues: Pacifastin-like protease inhibitor cvp4 (203 aa).

Residues 1-19 form the signal peptide; that stretch reads MGFLACALLVVATAHAATA. Pacifastin domains follow at residues 23–59, 85–121, and 147–184; these read PETCEIGSNFKNYCNNCYCFDGVMDHALCTRESCDRN, DEPCTPGENFKYYCNDCQCLDGLRAHAMCTRMRCDRN, and DESCAPGASFKYYCNSCTCGAEGKVAEAQCTSQECDRY. Intrachain disulfides connect C26–C41, C36–C56, C39–C51, C88–C103, C98–C118, and C101–C113. Over residues 129–148 the composition is skewed to basic and acidic residues; it reads RKYPEPEKWNSEKERKKSDE. Residues 129-150 form a disordered region; sequence RKYPEPEKWNSEKERKKSDESC. Intrachain disulfides connect C150–C165, C160–C181, and C163–C176.

The protein belongs to the protease inhibitor I19 family. As to expression, expressed by the venom gland.

It is found in the secreted. Functionally, inhibits trypsin activity and prophenoloxidase (PPO) activation, an enzyme essential for both clotting and insect innate immune responses. It does not inhibit activity of chymotrypsin and protease K, and has no effect on phenoloxidase (PO) activity. The sequence is that of Pacifastin-like protease inhibitor cvp4 from Pimpla hypochondriaca (Parasitoid wasp).